Here is a 161-residue protein sequence, read N- to C-terminus: UPF0262 protein mll6455 (161 aa).

Belongs to the UPF0262 family.

The chain is UPF0262 protein mll6455 from Mesorhizobium japonicum (strain LMG 29417 / CECT 9101 / MAFF 303099) (Mesorhizobium loti (strain MAFF 303099)).